The chain runs to 244 residues: Neurogenin-1 (244 aa).

Disordered stretches follow at residues 1 to 27 (MPAP…SSFL) and 39 to 82 (LAST…ARVR). A compositionally biased stretch (low complexity) spans 10-27 (SDLDCSSSNSSSDLSSFL). One can recognise a bHLH domain in the interval 93–145 (SRRVKANDRERNRMHNLNAALDALRSVLPSFPDDTKLTKIETLRFAYNYIWAL).

As to quaternary structure, efficient DNA binding requires dimerization with another bHLH protein. As to expression, expression restricted to the embryonic nervous system.

The protein localises to the nucleus. In terms of biological role, acts as a transcriptional regulator. Involved in the initiation of neuronal differentiation. Activates transcription by binding to the E box (5'-CANNTG-3'). Associates with chromatin to enhancer regulatory elements in genes encoding key transcriptional regulators of neurogenesis. In Mus musculus (Mouse), this protein is Neurogenin-1 (Neurog1).